A 454-amino-acid chain; its full sequence is UDP-N-acetylmuramoylalanine--D-glutamate ligase (454 aa).

116–122 (GTNGKTS) is a binding site for ATP.

This sequence belongs to the MurCDEF family.

It localises to the cytoplasm. The catalysed reaction is UDP-N-acetyl-alpha-D-muramoyl-L-alanine + D-glutamate + ATP = UDP-N-acetyl-alpha-D-muramoyl-L-alanyl-D-glutamate + ADP + phosphate + H(+). Its pathway is cell wall biogenesis; peptidoglycan biosynthesis. In terms of biological role, cell wall formation. Catalyzes the addition of glutamate to the nucleotide precursor UDP-N-acetylmuramoyl-L-alanine (UMA). In Lachnoclostridium phytofermentans (strain ATCC 700394 / DSM 18823 / ISDg) (Clostridium phytofermentans), this protein is UDP-N-acetylmuramoylalanine--D-glutamate ligase.